Consider the following 136-residue polypeptide: Nucleoside diphosphate kinase (136 aa).

ATP-binding residues include Lys10, Phe58, Arg86, Thr92, Arg104, and Asn114. The active-site Pros-phosphohistidine intermediate is His117.

The protein belongs to the NDK family. Homotetramer. Mg(2+) serves as cofactor.

It is found in the cytoplasm. The catalysed reaction is a 2'-deoxyribonucleoside 5'-diphosphate + ATP = a 2'-deoxyribonucleoside 5'-triphosphate + ADP. It carries out the reaction a ribonucleoside 5'-diphosphate + ATP = a ribonucleoside 5'-triphosphate + ADP. Functionally, major role in the synthesis of nucleoside triphosphates other than ATP. The ATP gamma phosphate is transferred to the NDP beta phosphate via a ping-pong mechanism, using a phosphorylated active-site intermediate. The polypeptide is Nucleoside diphosphate kinase (Mycolicibacterium gilvum (strain PYR-GCK) (Mycobacterium gilvum (strain PYR-GCK))).